The sequence spans 971 residues: Reversion-inducing cysteine-rich protein with Kazal motifs (971 aa).

A signal peptide spans 1–22 (MATVRASLRGALLLLLAVAGVA). One copy of the Knot 1 repeat lies at 37-84 (CCNHSKDNQMCRDVCEQIFSSKSESRLKHLLQRAPDYCPETMVEIWNC). Residues 37-338 (CCNHSKDNQM…NPVEVSMLTC (302 aa)) form a 5 X Knot repeats region. 2 N-linked (GlcNAc...) asparagine glycosylation sites follow: asparagine 39 and asparagine 86. Knot repeat units follow at residues 104–141 (CCEL…LFSC) and 151–197 (CCSY…LIHC). An N-linked (GlcNAc...) asparagine glycan is attached at asparagine 200. 2 Knot repeats span residues 216–263 (CCDR…LWQC) and 292–338 (CCSK…MLTC). N-linked (GlcNAc...) asparagine glycosylation is found at asparagine 297 and asparagine 352. Kazal-like domains lie at 627 to 673 (TFTG…SCMS), 698 to 752 (TFDK…PCQP), and 753 to 789 (FCRA…DCQA). Disulfide bonds link cysteine 633-cysteine 658, cysteine 635-cysteine 654, cysteine 643-cysteine 671, cysteine 716-cysteine 735, cysteine 724-cysteine 750, and cysteine 761-cysteine 787. Serine 942 is lipidated: GPI-anchor amidated serine. Residues 943 to 971 (AGVRARPSCHSLLLPLSLGLALHLLWTYN) constitute a propeptide, removed in mature form.

Belongs to the RECK family. As to quaternary structure, interacts (via knot repeats) with WNT7A (via disordered linker region); the interaction is direct. Interacts (via knot repeats) with WNT7B (via disordered linker region); the interaction is direct. Interacts with ADGRA2; the interaction is direct. Interacts with MMP9. N-glycosylated. As to expression, expressed in various tissues and untransformed cells. It is undetectable in tumor-derived cell lines and oncogenically transformed cells.

Its subcellular location is the cell membrane. In terms of biological role, functions together with ADGRA2 to enable brain endothelial cells to selectively respond to Wnt7 signals (WNT7A or WNT7B). Plays a key role in Wnt7-specific responses: required for central nervous system (CNS) angiogenesis and blood-brain barrier regulation. Acts as a Wnt7-specific coactivator of canonical Wnt signaling by decoding Wnt ligands: acts by interacting specifically with the disordered linker region of Wnt7, thereby conferring ligand selectivity for Wnt7. ADGRA2 is then required to deliver RECK-bound Wnt7 to frizzled by assembling a higher-order RECK-ADGRA2-Fzd-LRP5-LRP6 complex. Also acts as a serine protease inhibitor: negatively regulates matrix metalloproteinase-9 (MMP9) by suppressing MMP9 secretion and by direct inhibition of its enzymatic activity. Also inhibits metalloproteinase activity of MMP2 and MMP14 (MT1-MMP). The chain is Reversion-inducing cysteine-rich protein with Kazal motifs from Homo sapiens (Human).